The sequence spans 229 residues: Biosynthetic peptidoglycan transglycosylase (229 aa).

Residues 10–30 traverse the membrane as a helical segment; that stretch reads LLLALVLVVLYQFWIFMHILW.

It belongs to the glycosyltransferase 51 family.

It is found in the cell inner membrane. The catalysed reaction is [GlcNAc-(1-&gt;4)-Mur2Ac(oyl-L-Ala-gamma-D-Glu-L-Lys-D-Ala-D-Ala)](n)-di-trans,octa-cis-undecaprenyl diphosphate + beta-D-GlcNAc-(1-&gt;4)-Mur2Ac(oyl-L-Ala-gamma-D-Glu-L-Lys-D-Ala-D-Ala)-di-trans,octa-cis-undecaprenyl diphosphate = [GlcNAc-(1-&gt;4)-Mur2Ac(oyl-L-Ala-gamma-D-Glu-L-Lys-D-Ala-D-Ala)](n+1)-di-trans,octa-cis-undecaprenyl diphosphate + di-trans,octa-cis-undecaprenyl diphosphate + H(+). It functions in the pathway cell wall biogenesis; peptidoglycan biosynthesis. Functionally, peptidoglycan polymerase that catalyzes glycan chain elongation from lipid-linked precursors. In Methylobacillus flagellatus (strain ATCC 51484 / DSM 6875 / VKM B-1610 / KT), this protein is Biosynthetic peptidoglycan transglycosylase.